Consider the following 445-residue polypeptide: GTPase Der (445 aa).

EngA-type G domains follow at residues 3 to 167 (PVIA…YAGE) and 180 to 353 (IKIA…AAAM). Residues 9 to 16 (GRPNVGKS), 56 to 60 (DTGGF), 119 to 122 (NKAE), 186 to 193 (GRPNVGKS), 233 to 237 (DTAGL), and 298 to 301 (NKWD) contribute to the GTP site. Residues 354-438 (KKLPTPKLTR…PLRIEFRSST (85 aa)) enclose the KH-like domain.

Belongs to the TRAFAC class TrmE-Era-EngA-EngB-Septin-like GTPase superfamily. EngA (Der) GTPase family. In terms of assembly, associates with the 50S ribosomal subunit.

In terms of biological role, GTPase that plays an essential role in the late steps of ribosome biogenesis. In Burkholderia pseudomallei (strain 1106a), this protein is GTPase Der.